A 230-amino-acid chain; its full sequence is ATP synthase subunit a (230 aa).

5 consecutive transmembrane segments (helical) span residues 17 to 37, 78 to 98, 107 to 127, 165 to 187, and 198 to 218; these read LPIT…FIMA, IFPF…IGVI, DLSV…WFGI, LFGN…GFLV, and EAII…AGGI.

The protein belongs to the ATPase A chain family. In terms of assembly, F-type ATPases have 2 components, CF(1) - the catalytic core - and CF(0) - the membrane proton channel. CF(1) has five subunits: alpha(3), beta(3), gamma(1), delta(1), epsilon(1). CF(0) has three main subunits: a(1), b(2) and c(9-12). The alpha and beta chains form an alternating ring which encloses part of the gamma chain. CF(1) is attached to CF(0) by a central stalk formed by the gamma and epsilon chains, while a peripheral stalk is formed by the delta and b chains.

The protein localises to the cell inner membrane. Key component of the proton channel; it plays a direct role in the translocation of protons across the membrane. The chain is ATP synthase subunit a from Legionella pneumophila (strain Paris).